The chain runs to 153 residues: 3-hydroxyacyl-[acyl-carrier-protein] dehydratase FabZ (153 aa).

His-54 is an active-site residue.

Belongs to the thioester dehydratase family. FabZ subfamily.

Its subcellular location is the cytoplasm. The enzyme catalyses a (3R)-hydroxyacyl-[ACP] = a (2E)-enoyl-[ACP] + H2O. Functionally, involved in unsaturated fatty acids biosynthesis. Catalyzes the dehydration of short chain beta-hydroxyacyl-ACPs and long chain saturated and unsaturated beta-hydroxyacyl-ACPs. The protein is 3-hydroxyacyl-[acyl-carrier-protein] dehydratase FabZ of Shewanella pealeana (strain ATCC 700345 / ANG-SQ1).